Reading from the N-terminus, the 490-residue chain is MYHGMNPSNGDGFLEQQLQQQQPQSPQRLLAVILWFQLALCFGPAQLTGGFDDLNVCADPGVPENGFRTPSGGVFFESSVTRFHCQDGFRLKGSTKRLCMKHFNGTLGWVPSDKPVCIQEDCRIPQIEDAEIRNKTYRHGEKLVIDCHEGFKIRYPDLYNLVSLCRDDGTWDNLPICQGCLRPLASSNGYVNISEFQTSFPVGTVIAYRCFPGFKLEGSENLECLHNLIWSSSPPRCLALEVCPLPPMVSHGDFICHPRPCERYNHGTVVEFYCDPGYSLTSDYKYITCQYGEWFPSYQVYCIKSEQTWPSTHETLLTTWKIVAFTATSVLLVLLLVILARMFQTKFKAHFPPRGPPRSSSSDPDFVVVDGVPVMLPTYDEAVNGSSSALGPGYPASVGQGCPLPVDDQSPPAYPGSGDTDTGPGESETCDSTSGSSEMLQSLYSPPMCQGGSRPAPDTPDTISSTAGEVASTSPGIDIADEIPLMEEDP.

The tract at residues 1-20 (MYHGMNPSNGDGFLEQQLQQ) is disordered. A signal peptide spans 1–41 (MYHGMNPSNGDGFLEQQLQQQQPQSPQRLLAVILWFQLALC). At 42 to 319 (FGPAQLTGGF…PSTHETLLTT (278 aa)) the chain is on the extracellular side. 4 Sushi domains span residues 55-119 (NVCA…VCIQ), 120-179 (EDCR…ICQG), 178-239 (QGCL…RCLA), and 241-304 (EVCP…YCIK). Disulfide bonds link Cys57-Cys99, Cys85-Cys117, Cys122-Cys165, Cys147-Cys177, Cys180-Cys224, Cys210-Cys237, Cys243-Cys289, and Cys274-Cys302. N-linked (GlcNAc...) asparagine glycosylation is found at Asn104 and Asn134. N-linked (GlcNAc...) asparagine glycosylation occurs at Asn192. Residues 320-340 (WKIVAFTATSVLLVLLLVILA) traverse the membrane as a helical segment. The Cytoplasmic segment spans residues 341 to 490 (RMFQTKFKAH…DEIPLMEEDP (150 aa)). The segment at 394-490 (YPASVGQGCP…DEIPLMEEDP (97 aa)) is disordered. 2 stretches are compositionally biased toward polar residues: residues 430–444 (CDST…QSLY) and 461–475 (DTIS…STSP). Positions 479 to 490 (IADEIPLMEEDP) are enriched in acidic residues.

As to expression, high expression in brain and eye, with weaker expression in spinal cord and testis. Detected in white matter of brain and in the outer segments of photoreceptors.

The protein resides in the membrane. Acts as a complement inhibitor by disrupting the formation of the classical C3 convertase. Isoform 3 inhibits the classical complement pathway, while membrane-bound isoform 1 inhibits deposition of C3b via both the classical and alternative complement pathways. This Mus musculus (Mouse) protein is Sushi domain-containing protein 4 (Susd4).